The chain runs to 149 residues: Arginine repressor (149 aa).

It belongs to the ArgR family.

It is found in the cytoplasm. Its pathway is amino-acid biosynthesis; L-arginine biosynthesis [regulation]. In terms of biological role, regulates arginine biosynthesis genes. The polypeptide is Arginine repressor (Listeria innocua serovar 6a (strain ATCC BAA-680 / CLIP 11262)).